Consider the following 381-residue polypeptide: Cytochrome b (381 aa).

A run of 4 helical transmembrane segments spans residues 33-53 (FGSLLGICLVIQILTGLFLAM), 77-98 (WLIRNLHANGASMFFMCLFLHV), 113-133 (WNIGVILLLTVMATAFVGYVL), and 178-198 (FFAFHFILPFIIMALVIVHLL). Heme b-binding residues include His-83 and His-97. Heme b contacts are provided by His-182 and His-196. His-201 provides a ligand contact to a ubiquinone. A run of 4 helical transmembrane segments spans residues 226–246 (IKDALGLMFLLLVLLTLALFS), 288–308 (LGGVLALLASILILLIIPLLH), 320–340 (VSQTLFWILTANLITLTWIGG), and 347–367 (FIIIGQSASILLSMLILVLMP).

The protein belongs to the cytochrome b family. The cytochrome bc1 complex contains 11 subunits: 3 respiratory subunits (MT-CYB, CYC1 and UQCRFS1), 2 core proteins (UQCRC1 and UQCRC2) and 6 low-molecular weight proteins (UQCRH/QCR6, UQCRB/QCR7, UQCRQ/QCR8, UQCR10/QCR9, UQCR11/QCR10 and a cleavage product of UQCRFS1). This cytochrome bc1 complex then forms a dimer. Requires heme b as cofactor.

It localises to the mitochondrion inner membrane. Its function is as follows. Component of the ubiquinol-cytochrome c reductase complex (complex III or cytochrome b-c1 complex) that is part of the mitochondrial respiratory chain. The b-c1 complex mediates electron transfer from ubiquinol to cytochrome c. Contributes to the generation of a proton gradient across the mitochondrial membrane that is then used for ATP synthesis. The chain is Cytochrome b (MT-CYB) from Ningaui yvonnae (Southern ningaui).